A 548-amino-acid chain; its full sequence is WAP, Kazal, immunoglobulin, Kunitz and NTR domain-containing protein 1 (548 aa).

A signal peptide spans 1 to 19 (MPALRPLLPLLLLLRLTSG). Residues 26 to 79 (LGSHPGVCPNQLSPNLWVDAQSTCERECSRDQDCAAAEKCCINVCGLHSCVAAR) enclose the WAP domain. Cystine bridges form between Cys-33/Cys-66, Cys-49/Cys-70, Cys-53/Cys-65, Cys-59/Cys-75, Cys-116/Cys-146, Cys-120/Cys-139, and Cys-128/Cys-157. The Kazal-like domain maps to 108–159 (WDGQPVCRCRDRCEKEPSFTCASDGLTYYNRCYMDAEACLRGLHLHIVPCKH). Residues 164-184 (PPSSPGPPETTARPTPGAAPV) are disordered. The Ig-like C2-type domain maps to 186-279 (PALYSSPSPQ…GLLRADFPLS (94 aa)). Disulfide bonds link Cys-207–Cys-263, Cys-299–Cys-351, Cys-306–Cys-334, Cys-326–Cys-347, Cys-359–Cys-409, Cys-368–Cys-392, Cys-384–Cys-405, Cys-417–Cys-489, Cys-420–Cys-491, and Cys-431–Cys-540. BPTI/Kunitz inhibitor domains lie at 299-351 (CLPD…QQAC) and 359-409 (CVLP…EDAC). The NTR domain occupies 409–540 (CPVPRTPPCR…ILELLEKQAC (132 aa)). N-linked (GlcNAc...) asparagine glycosylation is present at Asn-493.

Belongs to the WFIKKN family. In terms of tissue distribution, expressed in pancreas, kidney, liver, placenta, and lung.

It localises to the secreted. Its function is as follows. Protease-inhibitor that contains multiple distinct protease inhibitor domains. Probably has serine protease- and metalloprotease-inhibitor activity. The polypeptide is WAP, Kazal, immunoglobulin, Kunitz and NTR domain-containing protein 1 (WFIKKN1) (Homo sapiens (Human)).